Reading from the N-terminus, the 366-residue chain is Dehydrogenase aclE (366 aa).

The N-terminal stretch at 1–19 is a signal peptide; the sequence is MSKRIRLGIVGLSADPSHC. Residue N330 is glycosylated (N-linked (GlcNAc...) asparagine).

The protein belongs to the Gfo/Idh/MocA family.

The protein operates within mycotoxin biosynthesis. Dehydrogenase; part of the gene cluster that mediates the biosynthesis of aspirochlorine (or antibiotic A30641), an unusual halogenated spiro compound with distinctive antifungal properties due to selective inhibition of protein biosynthesis, and which is also active against bacteria, viruses, and murine tumor cells. The non-ribosomal peptide synthetase (NRPS) aclP is responsible the formation of the diketopiperazine (DKP) core from the condensation of 2 phenylalanine residues. One Phe residue is tailored into chlorotyrosine by hydroxylation and chlorination, whereas the second Phe undergoes an unprecedented C-C bond cleavage to be converted into glycine. After formation of the DKP, sulfur is incorporated into the DKP by conjugation with glutathione by aclG, followed by its stepwise degradation to the thiol by aclI, aclJ and aclK, and the dithiol oxidation by aclT. In addition, oxygenases (aclB, aclC, aclL and aclO) and O-methyltransferases (aclM and aclU) act as tailoring enzymes to produce the intermediate dechloroaspirochlorine. Ultimately, chlorination of dechloroaspirochlorine by the halogenase aclH is the last step in the aspirochlorine pathway. This is Dehydrogenase aclE from Aspergillus oryzae (strain ATCC 42149 / RIB 40) (Yellow koji mold).